A 23-amino-acid polypeptide reads, in one-letter code: Acidic phospholipase A2 CTs-A2 (23 aa).

The cofactor is Ca(2+). Post-translationally, contains 7 disulfide bonds. As to expression, expressed by the venom gland.

The protein localises to the secreted. The enzyme catalyses a 1,2-diacyl-sn-glycero-3-phosphocholine + H2O = a 1-acyl-sn-glycero-3-phosphocholine + a fatty acid + H(+). Functionally, snake venom phospholipase A2 (PLA2) that shows a moderate inhibition of ADP-induced human platelet aggregation when tested on platelet rich plasma. Exhibits moderate hydrolytic activities and prefers the anionic micelles (dPPC with deoxycholate) to the zwitterionic micelles (dPPC with Triton X-100). PLA2 catalyzes the calcium-dependent hydrolysis of the 2-acyl groups in 3-sn-phosphoglycerides. The sequence is that of Acidic phospholipase A2 CTs-A2 from Trimeresurus stejnegeri (Chinese green tree viper).